The sequence spans 470 residues: 3-isopropylmalate dehydratase large subunit (470 aa).

The [4Fe-4S] cluster site is built by C351, C411, and C414.

Belongs to the aconitase/IPM isomerase family. LeuC type 1 subfamily. As to quaternary structure, heterodimer of LeuC and LeuD. Requires [4Fe-4S] cluster as cofactor.

It catalyses the reaction (2R,3S)-3-isopropylmalate = (2S)-2-isopropylmalate. It participates in amino-acid biosynthesis; L-leucine biosynthesis; L-leucine from 3-methyl-2-oxobutanoate: step 2/4. Its function is as follows. Catalyzes the isomerization between 2-isopropylmalate and 3-isopropylmalate, via the formation of 2-isopropylmaleate. The chain is 3-isopropylmalate dehydratase large subunit from Rhodopseudomonas palustris (strain BisA53).